Reading from the N-terminus, the 358-residue chain is Stearoyl-CoA desaturase 2 (358 aa).

The Cytoplasmic portion of the chain corresponds to 1–71 (MPAHILQEIS…EGPPPKLEYV (71 aa)). The interval 14–43 (SATTTITAPPSGGQQNGGEKFEKNPHHWGA) is disordered. Over residues 32–43 (EKFEKNPHHWGA) the composition is skewed to basic and acidic residues. A helical transmembrane segment spans residues 72 to 92 (WRNIVLMALLHIGALYGITLV). N74 contacts substrate. Over 93-96 (PSCK) the chain is Lumenal. A helical membrane pass occupies residues 97 to 117 (VYTCLFAYLYYVISALGITAG). Over 118 to 216 (AHRLWSHRTY…EKLVMFQRRY (99 aa)) the chain is Cytoplasmic. Fe cation contacts are provided by H119 and H124. Positions 119-124 (HRLWSH) match the Histidine box-1 motif. Substrate is bound by residues N147, R154, and D155. Fe cation is bound by residues H156, H159, and H160. The Histidine box-2 motif lies at 156-160 (HRAHH). Substrate contacts are provided by R187 and K188. Residues 217–236 (YKPGLLLMCFILPTLVPWYC) form a helical membrane-spanning segment. Topologically, residues 237 to 240 (WGET) are lumenal. Residues 241-262 (FVNSLCVSTFLRYAVVLNATWL) form a helical membrane-spanning segment. W261 contacts substrate. Residues 263–358 (VNSAAHLYGY…RTGEESCKSG (96 aa)) are Cytoplasmic-facing. The Fe cation site is built by H268, H297, H300, and H301. Positions 297–301 (HNYHH) match the Histidine box-3 motif.

It belongs to the fatty acid desaturase type 1 family. Fe(2+) serves as cofactor. As to expression, detected in brain and adipose tissue, and at much lower levels in testis. Detected in liver when rats are kept on a fat-free diet, but not when their food contains unsaturated fatty acids.

It is found in the endoplasmic reticulum membrane. It localises to the microsome membrane. It catalyses the reaction octadecanoyl-CoA + 2 Fe(II)-[cytochrome b5] + O2 + 2 H(+) = (9Z)-octadecenoyl-CoA + 2 Fe(III)-[cytochrome b5] + 2 H2O. The enzyme catalyses hexadecanoyl-CoA + 2 Fe(II)-[cytochrome b5] + O2 + 2 H(+) = (9Z)-hexadecenoyl-CoA + 2 Fe(III)-[cytochrome b5] + 2 H2O. In terms of biological role, stearoyl-CoA desaturase that utilizes O(2) and electrons from reduced cytochrome b5 to introduce the first double bond into saturated fatty acyl-CoA substrates. Catalyzes the insertion of a cis double bond at the delta-9 position into fatty acyl-CoA substrates including palmitoyl-CoA and stearoyl-CoA. Gives rise to a mixture of 16:1 and 18:1 unsaturated fatty acids. Contributes to the biosynthesis of membrane phospholipids, cholesterol esters and triglycerides, especially during embryonic development and in neonates. Important for normal permeability barrier function of the skin in neonates. The protein is Stearoyl-CoA desaturase 2 (Scd2) of Rattus norvegicus (Rat).